The chain runs to 105 residues: Small ribosomal subunit protein uS10 (105 aa).

It belongs to the universal ribosomal protein uS10 family. Part of the 30S ribosomal subunit.

Involved in the binding of tRNA to the ribosomes. The polypeptide is Small ribosomal subunit protein uS10 (Anaplasma phagocytophilum (strain HZ)).